The following is a 301-amino-acid chain: Probable DNA-directed RNA polymerase III subunit rpc6 (301 aa).

Belongs to the eukaryotic RPC34/RPC39 RNA polymerase subunit family. In terms of assembly, component of the RNA polymerase III (Pol III) complex consisting of 17 subunits. Interacts with TFIIB.

It is found in the nucleus. Its function is as follows. DNA-dependent RNA polymerase catalyzes the transcription of DNA into RNA using the four ribonucleoside triphosphates as substrates. Specific peripheric component of RNA polymerase III which synthesizes small RNAs, such as 5S rRNA and tRNAs. This Schizosaccharomyces pombe (strain 972 / ATCC 24843) (Fission yeast) protein is Probable DNA-directed RNA polymerase III subunit rpc6 (rpc6).